The following is a 272-amino-acid chain: Oligodendrocyte transcription factor 3 (272 aa).

The span at 1 to 14 (MNSDSSSVSSRASS) shows a compositional bias: low complexity. Residues 1-71 (MNSDSSSVSS…KAAGESSKYK (71 aa)) form a disordered region. Basic residues predominate over residues 24-33 (DHHHRHHHHQ). Residues 36-46 (RLNSVSSTQGD) are compositionally biased toward polar residues. A coiled-coil region spans residues 68–89 (SKYKIKKQLSEQDLQQLRLKIN). A bHLH domain is found at 83–137 (QLRLKINGRERKRMHDLNLAMDGLREVMPYAHGPSVRKLSKIATLLLARNYILML).

Its subcellular location is the nucleus. In terms of biological role, may determine the distinct specification program of class A neurons in the dorsal part of the spinal cord and suppress specification of class B neurons. This chain is Oligodendrocyte transcription factor 3 (OLIG3), found in Homo sapiens (Human).